The primary structure comprises 288 residues: 2-methoxy-6-polyprenyl-1,4-benzoquinol methylase, mitochondrial (288 aa).

S-adenosyl-L-methionine-binding residues include Thr-68, Asp-102, and Ser-146. Residues 260–270 (PITPTTSSDIP) show a composition bias toward low complexity. Residues 260 to 288 (PITPTTSSDIPAQNTSEATCEVKPEPNSA) are disordered. Basic and acidic residues predominate over residues 279 to 288 (CEVKPEPNSA).

The protein belongs to the class I-like SAM-binding methyltransferase superfamily. MenG/UbiE family. Component of a multi-subunit COQ enzyme complex.

The protein localises to the mitochondrion inner membrane. It carries out the reaction a 2-methoxy-6-(all-trans-polyprenyl)benzene-1,4-diol + S-adenosyl-L-methionine = a 5-methoxy-2-methyl-3-(all-trans-polyprenyl)benzene-1,4-diol + S-adenosyl-L-homocysteine + H(+). It participates in cofactor biosynthesis; ubiquinone biosynthesis. Functionally, methyltransferase required for the conversion of 2-polyprenyl-6-methoxy-1,4-benzoquinol (DDMQH2) to 2-polyprenyl-3-methyl-6-methoxy-1,4-benzoquinol (DMQH2). This is 2-methoxy-6-polyprenyl-1,4-benzoquinol methylase, mitochondrial from Leishmania donovani.